Consider the following 81-residue polypeptide: Protein GPR15LG (81 aa).

Residues 1-24 (MRFLALTSLLCILLLCLSFFSAEG) form the signal peptide. Disulfide bonds link Cys40-Cys63 and Cys41-Cys60.

In terms of assembly, interacts with SUSD2; the interaction is direct.

It is found in the secreted. Its function is as follows. Highly cationic protein that has multiple functions. Acts as a chemotactic factor that mediates lymphocytes recruitment to epithelia through binding and activation of the G-protein coupled receptor GPR15. May be a tumor suppressor; together with SUSD2 has a growth inhibitory effect on colon cancer cells which includes G1 cell cycle arrest. May regulate keratinocyte proliferation. In addition, through activation of Mas-related G protein-coupled receptors (MRGPRs) contributes to pruritogenesis by activating itch-selective sensory neurons and mast cells degranulation. Functionally, has antimicrobial activity against Gram-positive bacteria, including Staphylococcus aureus and Actinomyces spec., and Mycoplasma hominis and lentivirus. This chain is Protein GPR15LG (GPR15LG), found in Sus scrofa (Pig).